The following is a 360-amino-acid chain: UDP-N-acetylglucosamine--N-acetylmuramyl-(pentapeptide) pyrophosphoryl-undecaprenol N-acetylglucosamine transferase (360 aa).

UDP-N-acetyl-alpha-D-glucosamine contacts are provided by Ser198 and Gln289.

Belongs to the glycosyltransferase 28 family. MurG subfamily.

Its subcellular location is the cell membrane. The enzyme catalyses Mur2Ac(oyl-L-Ala-gamma-D-Glu-L-Lys-D-Ala-D-Ala)-di-trans,octa-cis-undecaprenyl diphosphate + UDP-N-acetyl-alpha-D-glucosamine = beta-D-GlcNAc-(1-&gt;4)-Mur2Ac(oyl-L-Ala-gamma-D-Glu-L-Lys-D-Ala-D-Ala)-di-trans,octa-cis-undecaprenyl diphosphate + UDP + H(+). It participates in cell wall biogenesis; peptidoglycan biosynthesis. Functionally, cell wall formation. Catalyzes the transfer of a GlcNAc subunit on undecaprenyl-pyrophosphoryl-MurNAc-pentapeptide (lipid intermediate I) to form undecaprenyl-pyrophosphoryl-MurNAc-(pentapeptide)GlcNAc (lipid intermediate II). The chain is UDP-N-acetylglucosamine--N-acetylmuramyl-(pentapeptide) pyrophosphoryl-undecaprenol N-acetylglucosamine transferase from Streptococcus pyogenes serotype M3 (strain SSI-1).